Reading from the N-terminus, the 172-residue chain is MAPLQPGDSFPANVVFSYIPPTGSLDLTVCGRPIEYNASEALAKGTSVLVAVPGAFTPTCQEKHVTGFIAKLDQLRQAGVDRVLFIASNDAFVMSAWGKANGIKDESILFLSDSDTAFSSSIGWANAGRTGRYAIVVKDGKVVYAAVDTVRGSTEKSGVDAVLTVLGNQGKL.

The Thioredoxin domain occupies 4–171 (LQPGDSFPAN…VLTVLGNQGK (168 aa)). Lys-44 is covalently cross-linked (Glycyl lysine isopeptide (Lys-Gly) (interchain with G-Cter in URM1)). Cys-60 serves as the catalytic Cysteine sulfenic acid (-SOH) intermediate. Cys-60 bears the Cysteine persulfide mark. Glycyl lysine isopeptide (Lys-Gly) (interchain with G-Cter in URM1) cross-links involve residues Lys-63, Lys-99, Lys-141, Lys-156, and Lys-171.

Belongs to the peroxiredoxin family. Prx5 subfamily. Homodimer; disulfide-linked, upon oxidation. Post-translationally, conjugated to URM1, a ubiquitin-like protein, in response to oxidative stresses. The attachment of URM1 to lysine residues exclusively depends on the presence of a peroxidatic cysteine in the target protein, with low specificity for the particular residue, motif, or structural context at which urmylation can occur. The URM1-conjugation reaction is mechanistically and directly coupled to the process of cysteine persulfidation, transfering the sulfur atom of the URM1 thiocarboxyl group to redox-active cysteine residues in the target protein if it is exposed to oxidative conditions. In terms of processing, persulfidated on specific redox-active cysteine residues. Persulfidation (also called protein S-sulfhydration) may provide a molecular mechanism that enables cells to protect vulnerable cysteine residues from reactive oxygen species (ROS) under stress conditions.

The protein resides in the cytoplasm. It carries out the reaction a hydroperoxide + [thioredoxin]-dithiol = an alcohol + [thioredoxin]-disulfide + H2O. Its function is as follows. Thiol-specific peroxidase that catalyzes the reduction of hydrogen peroxide and organic hydroperoxides to water and alcohols, respectively. Plays a role in cell protection against oxidative stress by detoxifying peroxides and as sensor of hydrogen peroxide-mediated signaling events. Preferentially eliminates organic peroxides rather than hydrogen peroxide. Relays alkyl hydroperoxides as a signal to the transcription factor CAD1/YAP2 by inducing the formation of intramolecular disulfide bonds in CAD1, which causes its nuclear accumulation and activation. Involved in cellular Mn(2+) homeostasis. This Chaetomium thermophilum (strain DSM 1495 / CBS 144.50 / IMI 039719) (Thermochaetoides thermophila) protein is Peroxiredoxin AHP1 (AHP1).